We begin with the raw amino-acid sequence, 337 residues long: ERI1 exoribonuclease 3 (337 aa).

The 175-residue stretch at 146–320 (FLVLDFEATC…DDCKNIANIM (175 aa)) folds into the Exonuclease domain. Residues Asp-150, Glu-152, and Asp-249 each contribute to the Mg(2+) site. Glu-152 functions as the Proton acceptor in the catalytic mechanism. An AMP-binding site is contributed by Glu-152. His-307 serves as the catalytic Proton acceptor. His-307 is an AMP binding site. Asp-312 lines the Mg(2+) pocket.

In terms of assembly, interacts with PRNP. The cofactor is Mg(2+).

The polypeptide is ERI1 exoribonuclease 3 (ERI3) (Bos taurus (Bovine)).